The following is a 331-amino-acid chain: MKHNQNIDFVSIVIPVYNEEASLPELLSRTLAAADSMGKHYELVLIDDGSRDNSANIIEAAAAEPDSHVVGIILNRNYGQHNAIMAGFEHVRGDLIITLDADLQNPPEEIPNLVAKAEEGYDSVGTVRRHRQDSALRRYPSKLINKLVKRSTGVEMNDYGCMLRAYRRHVVKAMLECHERSTFIPILANGFARHTAEIDVHHSERSQGESKYGFMNLINLMFDLLTSMTTAPLRMLSIVGGGIASFGILFGLFLILLRLIYGAEWGVDGVFPLFSILFIFIGAQFVGLGLLGEYIGRIYSDVRARPRYYVQDILVGEATKGARISDENKNN.

2 helical membrane passes run 236–256 (LSIV…FLIL) and 270–290 (VFPL…GLGL).

The protein belongs to the glycosyltransferase 2 family.

The protein resides in the cell inner membrane. The catalysed reaction is UDP-4-deoxy-4-formamido-beta-L-arabinose + di-trans,octa-cis-undecaprenyl phosphate = 4-deoxy-4-formamido-alpha-L-arabinopyranosyl di-trans,octa-cis-undecaprenyl phosphate + UDP. The protein operates within glycolipid biosynthesis; 4-amino-4-deoxy-alpha-L-arabinose undecaprenyl phosphate biosynthesis; 4-amino-4-deoxy-alpha-L-arabinose undecaprenyl phosphate from UDP-4-deoxy-4-formamido-beta-L-arabinose and undecaprenyl phosphate: step 1/2. It participates in bacterial outer membrane biogenesis; lipopolysaccharide biosynthesis. Catalyzes the transfer of 4-deoxy-4-formamido-L-arabinose from UDP to undecaprenyl phosphate. The modified arabinose is attached to lipid A and is required for resistance to polymyxin and cationic antimicrobial peptides. The sequence is that of Undecaprenyl-phosphate 4-deoxy-4-formamido-L-arabinose transferase from Shewanella sediminis (strain HAW-EB3).